Here is a 117-residue protein sequence, read N- to C-terminus: Large ribosomal subunit protein uL18 (117 aa).

The protein belongs to the universal ribosomal protein uL18 family. As to quaternary structure, part of the 50S ribosomal subunit; part of the 5S rRNA/L5/L18/L25 subcomplex. Contacts the 5S and 23S rRNAs.

This is one of the proteins that bind and probably mediate the attachment of the 5S RNA into the large ribosomal subunit, where it forms part of the central protuberance. The polypeptide is Large ribosomal subunit protein uL18 (Halorhodospira halophila (strain DSM 244 / SL1) (Ectothiorhodospira halophila (strain DSM 244 / SL1))).